The following is a 233-amino-acid chain: Biosynthetic peptidoglycan transglycosylase (233 aa).

Residues 8 to 28 traverse the membrane as a helical segment; the sequence is LIALPVGIFIFFNAYVYGNII.

Belongs to the glycosyltransferase 51 family.

The protein localises to the cell inner membrane. It carries out the reaction [GlcNAc-(1-&gt;4)-Mur2Ac(oyl-L-Ala-gamma-D-Glu-L-Lys-D-Ala-D-Ala)](n)-di-trans,octa-cis-undecaprenyl diphosphate + beta-D-GlcNAc-(1-&gt;4)-Mur2Ac(oyl-L-Ala-gamma-D-Glu-L-Lys-D-Ala-D-Ala)-di-trans,octa-cis-undecaprenyl diphosphate = [GlcNAc-(1-&gt;4)-Mur2Ac(oyl-L-Ala-gamma-D-Glu-L-Lys-D-Ala-D-Ala)](n+1)-di-trans,octa-cis-undecaprenyl diphosphate + di-trans,octa-cis-undecaprenyl diphosphate + H(+). It participates in cell wall biogenesis; peptidoglycan biosynthesis. Functionally, peptidoglycan polymerase that catalyzes glycan chain elongation from lipid-linked precursors. The polypeptide is Biosynthetic peptidoglycan transglycosylase (Neisseria meningitidis serogroup C (strain 053442)).